The sequence spans 61 residues: MDPNCSCPTGGSCSCAGSCTCKACRCTSCKKSCCSCCPVGCAKCAQGCICKGASDKCSCCA.

N-acetylmethionine is present on Met1. Residues 1–29 (MDPNCSCPTGGSCSCAGSCTCKACRCTSC) form a beta region. Residues Cys5, Cys7, Cys13, Cys15, Cys19, Cys21, Cys24, Cys26, Cys29, Cys33, Cys34, Cys36, Cys37, Cys41, Cys44, Cys48, Cys50, Cys57, Cys59, and Cys60 each contribute to the a divalent metal cation site. Positions 30 to 61 (KKSCCSCCPVGCAKCAQGCICKGASDKCSCCA) are alpha.

It belongs to the metallothionein superfamily. Type 1 family. In terms of assembly, monomer.

Functionally, metallothioneins have a high content of cysteine residues that bind various heavy metals; these proteins are transcriptionally regulated by both heavy metals and glucocorticoids. This is Metallothionein-1E (MT1E) from Sus scrofa (Pig).